The sequence spans 51 residues: Basic phospholipase A2 homolog BmatTX-I (51 aa).

Cysteine 28 and cysteine 44 form a disulfide bridge.

Monomer. As to expression, expressed by the venom gland.

Its subcellular location is the secreted. Snake venom phospholipase A2 homolog that lacks enzymatic activity. Shows high myotoxic activity, neutrophile activation (demonstrated by activation induction of IL-1beta production), slight cytotoxicity against Jurkat (leukemia T) and SK-BR-3 (breast adenocarcinoma) tumor cell lines, and slight antiparasitic activity against promastigote forms of Leishmania amazonensis. A model of myotoxic mechanism has been proposed: an apo Lys49-PLA2 is activated by the entrance of a hydrophobic molecule (e.g. fatty acid) at the hydrophobic channel of the protein leading to a reorientation of a monomer. This reorientation causes a transition between 'inactive' to 'active' states, causing alignment of C-terminal and membrane-docking sites (MDoS) side-by-side and putting the membrane-disruption sites (MDiS) in the same plane, exposed to solvent and in a symmetric position for both monomers. The MDoS region stabilizes the toxin on membrane by the interaction of charged residues with phospholipid head groups. Subsequently, the MDiS region destabilizes the membrane with penetration of hydrophobic residues. This insertion causes a disorganization of the membrane, allowing an uncontrolled influx of ions (i.e. calcium and sodium), and eventually triggering irreversible intracellular alterations and cell death. This Bothrops mattogrossensis (Pitviper) protein is Basic phospholipase A2 homolog BmatTX-I.